Consider the following 439-residue polypeptide: Histidine--tRNA ligase (439 aa).

Belongs to the class-II aminoacyl-tRNA synthetase family. In terms of assembly, homodimer.

Its subcellular location is the cytoplasm. It carries out the reaction tRNA(His) + L-histidine + ATP = L-histidyl-tRNA(His) + AMP + diphosphate + H(+). In Leptospira interrogans serogroup Icterohaemorrhagiae serovar Lai (strain 56601), this protein is Histidine--tRNA ligase (hisS).